A 132-amino-acid polypeptide reads, in one-letter code: Dinoflagellate viral nucleoprotein 5 (132 aa).

The span at M1–K44 shows a compositional bias: basic residues. The interval M1–I84 is disordered. Residues G57–K66 are compositionally biased toward polar residues.

In terms of processing, phosphorylated.

The protein resides in the nucleus. The protein localises to the chromosome. In terms of biological role, DNA-binding protein, which similarly to histones, may compact DNA into chromatin. This is Dinoflagellate viral nucleoprotein 5 from Hematodinium sp.